Reading from the N-terminus, the 276-residue chain is Large ribosomal subunit protein uL2 (276 aa).

2 disordered regions span residues 29 to 55 and 219 to 276; these read PEKSLTTYKHSRQGRNNRGVITSRHRG and HVRG…RRTR. A compositionally biased stretch (basic residues) spans 259 to 276; the sequence is TRNKKKQSSKLIVRRRTR.

It belongs to the universal ribosomal protein uL2 family. In terms of assembly, part of the 50S ribosomal subunit. Forms a bridge to the 30S subunit in the 70S ribosome.

One of the primary rRNA binding proteins. Required for association of the 30S and 50S subunits to form the 70S ribosome, for tRNA binding and peptide bond formation. It has been suggested to have peptidyltransferase activity; this is somewhat controversial. Makes several contacts with the 16S rRNA in the 70S ribosome. The chain is Large ribosomal subunit protein uL2 from Rippkaea orientalis (strain PCC 8801 / RF-1) (Cyanothece sp. (strain PCC 8801)).